The primary structure comprises 156 residues: MTIIEGQLVANEMKIGIVVSRFNELITSKLLSGAVDGLLRHGVSEEDIDIVWVPGAFEIPYMARKMALYKDYDAIICLGVVIKGSTDHYDYVCNEVTKGIGHLNSQSDIPHIFGVLTTDNIEQAIERAGTKAGNKGYDCALSAIEMVNLDKKLRER.

Residues phenylalanine 22, alanine 56–glutamate 58, and valine 80–isoleucine 82 each bind 5-amino-6-(D-ribitylamino)uracil. Residue serine 85–threonine 86 participates in (2S)-2-hydroxy-3-oxobutyl phosphate binding. Histidine 88 (proton donor) is an active-site residue. Phenylalanine 113 provides a ligand contact to 5-amino-6-(D-ribitylamino)uracil. Arginine 127 contacts (2S)-2-hydroxy-3-oxobutyl phosphate.

This sequence belongs to the DMRL synthase family.

The catalysed reaction is (2S)-2-hydroxy-3-oxobutyl phosphate + 5-amino-6-(D-ribitylamino)uracil = 6,7-dimethyl-8-(1-D-ribityl)lumazine + phosphate + 2 H2O + H(+). Its pathway is cofactor biosynthesis; riboflavin biosynthesis; riboflavin from 2-hydroxy-3-oxobutyl phosphate and 5-amino-6-(D-ribitylamino)uracil: step 1/2. Its function is as follows. Catalyzes the formation of 6,7-dimethyl-8-ribityllumazine by condensation of 5-amino-6-(D-ribitylamino)uracil with 3,4-dihydroxy-2-butanone 4-phosphate. This is the penultimate step in the biosynthesis of riboflavin. This chain is 6,7-dimethyl-8-ribityllumazine synthase, found in Streptococcus agalactiae serotype Ia (strain ATCC 27591 / A909 / CDC SS700).